The sequence spans 182 residues: Ribosome-recycling factor (182 aa).

This sequence belongs to the RRF family.

It is found in the cytoplasm. Responsible for the release of ribosomes from messenger RNA at the termination of protein biosynthesis. May increase the efficiency of translation by recycling ribosomes from one round of translation to another. This Hydrogenobaculum sp. (strain Y04AAS1) protein is Ribosome-recycling factor.